The sequence spans 330 residues: Membrane progestin receptor gamma (330 aa).

The Cytoplasmic segment spans residues 1-51 (MLSLKLPRLFRIDQVPQVFHEQGILFGYRHPQSSATACILSLFQMTNETLN). Residues 52–72 (IWTHLLPFWFFVWRFMTALYV) traverse the membrane as a helical segment. The Extracellular segment spans residues 73-81 (TDIQNDSYS). The chain crosses the membrane as a helical span at residues 82 to 101 (WPMLVYMCTSCVYPLASSCA). Residues 102–113 (HTFSSMSKNARH) lie on the Cytoplasmic side of the membrane. A helical membrane pass occupies residues 114-134 (ICYFLDYGAVNLFSLGSAIAY). Residues 135-141 (SAYTFPD) lie on the Extracellular side of the membrane. The helical transmembrane segment at 142-162 (ALVCSTFHECYVALAVLNTIL) threads the bilayer. At 163-186 (STGLSCYSRFLELQKPRLCKLLRV) the chain is on the cytoplasmic side. The chain crosses the membrane as a helical span at residues 187–207 (LAFAYPYTWDSLPIFYRLFLF). Topologically, residues 208-253 (PGESSRNEAMLYHQKHMGMTLLASFFYSAHLPERLAPGRFDYIGHS) are extracellular. Residues 254 to 274 (HQLFHVCVILATHLQMEAILL) form a helical membrane-spanning segment. The Cytoplasmic portion of the chain corresponds to 275 to 294 (DKTLRREWLLATSRPFSFPQ). The chain crosses the membrane as a helical span at residues 295–315 (IAAAMLLCIIFSLSNIIYFSA). At 316–330 (ALYRIPEPELHEKET) the chain is on the extracellular side.

Belongs to the ADIPOR family.

Its subcellular location is the cell membrane. Functionally, plasma membrane progesterone (P4) receptor coupled to G proteins. Seems to act through a G(i) mediated pathway. May be involved in oocyte maturation. This Mus musculus (Mouse) protein is Membrane progestin receptor gamma.